A 1863-amino-acid chain; its full sequence is 5'-3' DNA helicase ZGRF1 (1863 aa).

Disordered stretches follow at residues 78-110, 132-196, and 300-349; these read SRAV…QPSG, ENSE…PLSL, and TQSI…PEAQ. The span at 81–90 shows a compositional bias: basic and acidic residues; the sequence is VEPDGSREAL. Over residues 92 to 105 the composition is skewed to low complexity; it reads SGSRTLVSSSRSLG. Composition is skewed to polar residues over residues 173–185 and 300–321; these read PVST…ITFS and TQSI…TTSR. A phosphoserine mark is found at serine 331 and serine 445. 3 disordered regions span residues 460–496, 524–545, and 610–664; these read PVSP…SKSN, TSDT…ERWE, and GDVK…GVSP. The segment covering 533–545 has biased composition (basic and acidic residues); the sequence is EDSRLSQDSERWE. Residues cysteine 1111, histidine 1113, cysteine 1136, and cysteine 1144 each coordinate Zn(2+). Residues 1111–1153 form a GRF-type zinc finger; the sequence is CHHNQPAKLVMVKKEGPNKGRLFYTCDKSKDNQCKFFKWLEEV.

As to quaternary structure, interacts with DNA repair protein RAD51; the interaction promotes RAD51 strand exchange activity. Also interacts with DNA repair proteins EXO1 and BRCA1; the interactions are increased following DNA damage induction.

Its subcellular location is the nucleus. The enzyme catalyses ATP + H2O = ADP + phosphate + H(+). It catalyses the reaction Couples ATP hydrolysis with the unwinding of duplex DNA at the replication fork by translocating in the 5'-3' direction. This creates two antiparallel DNA single strands (ssDNA). The leading ssDNA polymer is the template for DNA polymerase III holoenzyme which synthesizes a continuous strand.. Its function is as follows. 5'-3' DNA helicase which is recruited to sites of DNA damage and promotes repair of replication-blocking DNA lesions through stimulation of homologous recombination (HR). Promotes HR by directly stimulating RAD51-mediated strand exchange activity. Not required to load RAD51 at sites of DNA damage but promotes recombinational repair after RAD51 recruitment. Also promotes HR by positively regulating EXO1-mediated DNA end resection of DNA double-strand breaks. Required for recruitment of replication protein RPA2 to DNA damage sites. Promotes the initiation of the G2/M checkpoint but not its maintenance. Catalyzes Holliday junction branch migration and dissociation of D-loops and DNA flaps. This Mus musculus (Mouse) protein is 5'-3' DNA helicase ZGRF1 (Zgrf1).